A 2386-amino-acid polypeptide reads, in one-letter code: Protein kinase rad3 (2386 aa).

The FAT domain maps to 1386-1943 (TLGIVSLNCG…LWQLMATIKS (558 aa)). The region spanning 2052-2370 (FEDEVDIMNS…QIQELIKSAV (319 aa)) is the PI3K/PI4K catalytic domain. Residues 2058-2064 (IMNSLQK) are G-loop. The segment at 2227–2235 (GLGDRHGEN) is catalytic loop. An activation loop region spans residues 2247 to 2271 (HVDFNCLFDKGLTFEKPEKVPFRLT). The FATC domain maps to 2354-2386 (IPLSIEGQIQELIKSAVNPKNLVEMYIGWAAYF).

This sequence belongs to the PI3/PI4-kinase family. ATM subfamily. As to quaternary structure, interacts with crb2 (via BRCT domain). Interacts with chk1.

The protein localises to the nucleus. It carries out the reaction L-seryl-[protein] + ATP = O-phospho-L-seryl-[protein] + ADP + H(+). The catalysed reaction is L-threonyl-[protein] + ATP = O-phospho-L-threonyl-[protein] + ADP + H(+). In terms of biological role, serine/threonine kinase which activates checkpoint signaling upon genotoxic stresses. Involved in G2 arrest following DNA damage where it phosphorylates chk1. Phosphorylation of 'Thr-73' and 'Ser-80' of checkpoint mediator crb2 promotes its interaction with chk1. It is also involved in the dependence of mitosis on the completion of DNA replication. This Schizosaccharomyces pombe (strain 972 / ATCC 24843) (Fission yeast) protein is Protein kinase rad3 (rad3).